The primary structure comprises 197 residues: Ribonuclease HII (197 aa).

One can recognise an RNase H type-2 domain in the interval 3 to 192; that stretch reads QLIAGVDEVG…VQLSLMQRGG (190 aa). Residues Asp-9, Glu-10, and Asp-101 each coordinate a divalent metal cation.

Belongs to the RNase HII family. Mn(2+) serves as cofactor. It depends on Mg(2+) as a cofactor.

It is found in the cytoplasm. The catalysed reaction is Endonucleolytic cleavage to 5'-phosphomonoester.. Functionally, endonuclease that specifically degrades the RNA of RNA-DNA hybrids. This chain is Ribonuclease HII, found in Pseudoalteromonas atlantica (strain T6c / ATCC BAA-1087).